Consider the following 137-residue polypeptide: Large-conductance mechanosensitive channel (137 aa).

At methionine 1 to valine 16 the chain is on the cytoplasmic side. A helical membrane pass occupies residues valine 17–leucine 45. The Periplasmic segment spans residues glycine 46–asparagine 74. The chain crosses the membrane as a helical span at residues tyrosine 75 to isoleucine 94. At alanine 95–glutamine 137 the chain is on the cytoplasmic side.

It belongs to the MscL family. As to quaternary structure, homopentamer.

It localises to the cell inner membrane. Channel that opens in response to stretch forces in the membrane lipid bilayer. Forms a nonselective ion channel with a conductance of about 4 nanosiemens. May participate in the regulation of osmotic pressure changes within the cell. In Pectobacterium carotovorum (Erwinia carotovora), this protein is Large-conductance mechanosensitive channel.